A 200-amino-acid polypeptide reads, in one-letter code: Integrin beta-1-binding protein 1 (200 aa).

Positions 1–10 (MFRKGKKRHS) are enriched in basic residues. A disordered region spans residues 1-56 (MFRKGKKRHSSSSSQSSEISTKSKSVDSSLGGLSRSSTVASLDTDSTKSSGQSNNN). Residues 6-7 (KK) carry the Nuclear localization signal motif. Positions 11–29 (SSSSQSSEISTKSKSVDSS) are enriched in low complexity. Positions 34–56 (SRSSTVASLDTDSTKSSGQSNNN) are enriched in polar residues. Phosphothreonine; by CaMK2 is present on Thr38. Phosphoserine is present on Ser41. Positions 58-200 (DTCAEFRIKY…FDSVLTSEKP (143 aa)) constitute a PID domain. An interaction with KRIT1 region spans residues 136–139 (YLII). The tract at residues 139–141 (IRM) is interaction with ITGB1.

As to quaternary structure, interacts (via N-terminus and PTB domain) with ROCK1. Found in a complex, at least composed of ITGB1BP1, KRIT1 and RAP1A. Interacts (via C-terminal region) with ITGB1 (via C-terminal cytoplasmic tail); the interaction prevents talin TLN1 binding to ITGB1 and KRIT1 and ITGB1 compete for the same binding site. Interacts with KRIT1 (via N-terminal NPXY motif); the interaction induces the opening conformation of KRIT1 and KRIT1 and ITGB1 compete for the same binding site. Isoform 2 does not interact with ITGB1. Interacts with CDC42 (GTP- or GDP-bound form); the interaction is increased with the CDC42-membrane bound forms and prevents both CDC42 activation and cell spreading. Interacts (via C-terminal domain region) with NME2. Interacts with FERMT2 and RAC1. Post-translationally, phosphorylation at Thr-38 seems to enhance integrin alpha5beta1-mediated cell adhesion. The degree of phosphorylation is regulated by integrin-dependent cell-matrix interaction.

It is found in the nucleus. Its subcellular location is the cytoplasm. The protein localises to the cytoskeleton. The protein resides in the cell membrane. It localises to the cell projection. It is found in the lamellipodium. Its subcellular location is the ruffle. In terms of biological role, key regulator of the integrin-mediated cell-matrix interaction signaling by binding to the ITGB1 cytoplasmic tail and preventing the activation of integrin alpha-5/beta-1 (heterodimer of ITGA5 and ITGB1) by talin or FERMT1. Plays a role in cell proliferation, differentiation, spreading, adhesion and migration in the context of mineralization and bone development and angiogenesis. Stimulates cellular proliferation in a fibronectin-dependent manner. Involved in the regulation of beta-1 integrin-containing focal adhesion (FA) site dynamics by controlling its assembly rate during cell adhesion; inhibits beta-1 integrin clustering within FA by directly competing with talin TLN1, and hence stimulates osteoblast spreading and migration in a fibronectin- and/or collagen-dependent manner. Acts as a guanine nucleotide dissociation inhibitor (GDI) by regulating Rho family GTPases during integrin-mediated cell matrix adhesion; reduces the level of active GTP-bound form of both CDC42 and RAC1 GTPases upon cell adhesion to fibronectin. Stimulates the release of active CDC42 from the membranes to maintain it in an inactive cytoplasmic pool. Participates in the translocation of the Rho-associated protein kinase ROCK1 to membrane ruffles at cell leading edges of the cell membrane, leading to an increase of myoblast cell migration on laminin. Plays a role in bone mineralization at a late stage of osteoblast differentiation; modulates the dynamic formation of focal adhesions into fibrillar adhesions, which are adhesive structures responsible for fibronectin deposition and fibrillogenesis. Plays a role in blood vessel development; acts as a negative regulator of angiogenesis by attenuating endothelial cell proliferation and migration, lumen formation and sprouting angiogenesis by promoting AKT phosphorylation and inhibiting ERK1/2 phosphorylation through activation of the Notch signaling pathway. Promotes transcriptional activity of the MYC promoter. This is Integrin beta-1-binding protein 1 (ITGB1BP1) from Bos taurus (Bovine).